Here is a 205-residue protein sequence, read N- to C-terminus: Recombination protein RecR (205 aa).

Residues 58 to 75 (CSVCQNVTDRDADPCYIC) form a C4-type zinc finger. Residues 83 to 182 (SVICVVESPA…SVTKIARGIP (100 aa)) form the Toprim domain.

It belongs to the RecR family.

Functionally, may play a role in DNA repair. It seems to be involved in an RecBC-independent recombinational process of DNA repair. It may act with RecF and RecO. In Chlorobium limicola (strain DSM 245 / NBRC 103803 / 6330), this protein is Recombination protein RecR.